The sequence spans 71 residues: Prophage lysis protein S homolog EssD (71 aa).

Belongs to the lambda phage S protein family.

The polypeptide is Prophage lysis protein S homolog EssD (essD) (Escherichia coli (strain K12)).